The primary structure comprises 208 residues: Uracil phosphoribosyltransferase (208 aa).

5-phospho-alpha-D-ribose 1-diphosphate-binding positions include R78, R103, and 130–138 (DPMLATGGT). Uracil is bound by residues I193 and 198–200 (GDA). D199 contacts 5-phospho-alpha-D-ribose 1-diphosphate.

This sequence belongs to the UPRTase family. Mg(2+) is required as a cofactor.

The enzyme catalyses UMP + diphosphate = 5-phospho-alpha-D-ribose 1-diphosphate + uracil. The protein operates within pyrimidine metabolism; UMP biosynthesis via salvage pathway; UMP from uracil: step 1/1. Allosterically activated by GTP. In terms of biological role, catalyzes the conversion of uracil and 5-phospho-alpha-D-ribose 1-diphosphate (PRPP) to UMP and diphosphate. The polypeptide is Uracil phosphoribosyltransferase (Maridesulfovibrio salexigens (strain ATCC 14822 / DSM 2638 / NCIMB 8403 / VKM B-1763) (Desulfovibrio salexigens)).